We begin with the raw amino-acid sequence, 494 residues long: Alpha-amylase-related protein (494 aa).

The signal sequence occupies residues 1 to 20 (MFKFALALTLCLAGASLSLA). Gln-21 is modified (pyrrolidone carboxylic acid). Cys-48 and Cys-104 form a disulfide bridge. Ca(2+) is bound by residues Asn-118, Gln-169, and Asp-178. Cys-157 and Cys-171 form a disulfide bridge. Arg-206 serves as a coordination point for chloride. The active-site Nucleophile is the Asp-208. Residue His-212 coordinates Ca(2+). Glu-245 functions as the Proton donor in the catalytic mechanism. Residues Asn-308 and Arg-343 each contribute to the chloride site. 3 disulfides stabilise this stretch: Cys-376–Cys-382, Cys-418–Cys-441, and Cys-448–Cys-460.

This sequence belongs to the glycosyl hydrolase 13 family. As to quaternary structure, monomer. Ca(2+) serves as cofactor. Requires chloride as cofactor.

It localises to the secreted. The enzyme catalyses Endohydrolysis of (1-&gt;4)-alpha-D-glucosidic linkages in polysaccharides containing three or more (1-&gt;4)-alpha-linked D-glucose units.. The chain is Alpha-amylase-related protein (Amyrel) from Drosophila dossoui (Fruit fly).